Here is an 847-residue protein sequence, read N- to C-terminus: Glucans biosynthesis glucosyltransferase H (847 aa).

Residues 1-138 (MNKTTEYIDA…KWRTVGTIRR (138 aa)) lie on the Cytoplasmic side of the membrane. A helical membrane pass occupies residues 139–156 (YILLILTLAQTVVATWYM). At 157-193 (KTILPYQGWALINPMDMVGQDIWVSFMQLLPYMLQTG) the chain is on the periplasmic side. Residues 194-216 (ILILFAVLFCWVSAGFWTALMGF) form a helical membrane-spanning segment. Residues 217–511 (LQLLIGRDKY…LVKGMHPVHR (295 aa)) are Cytoplasmic-facing. A helical membrane pass occupies residues 512 to 534 (AVFLTGVMSYLSAPLWFMFLALS). Topologically, residues 535 to 567 (TALQVVHALTEPQYFLQPRQLFPVWPQWRPELA) are periplasmic. A helical transmembrane segment spans residues 568 to 590 (IALFASTMVLLFLPKLLSIMLIW). At 591–602 (CKGTKEYGGFWR) the chain is on the cytoplasmic side. The chain crosses the membrane as a helical span at residues 603 to 625 (VTLSLLLEVLFSVLLAPVRMLFH). Residues 626–679 (TVFVVSAFLGWEVVWNSPQRDDDSTPWGEAFMRHGSQLLLGLVWAVGMAWLDLR) are Periplasmic-facing. A helical transmembrane segment spans residues 680-702 (FLFWLAPIVFSLILSPFVSVISS). Topologically, residues 703-847 (RSTVGLRTKR…ALQGRTSSAG (145 aa)) are cytoplasmic.

It belongs to the glycosyltransferase 2 family. OpgH subfamily.

Its subcellular location is the cell inner membrane. Its pathway is glycan metabolism; osmoregulated periplasmic glucan (OPG) biosynthesis. Involved in the biosynthesis of osmoregulated periplasmic glucans (OPGs). The sequence is that of Glucans biosynthesis glucosyltransferase H from Salmonella typhi.